A 130-amino-acid chain; its full sequence is Astrocytic phosphoprotein PEA-15 (130 aa).

In terms of domain architecture, DED spans 3 to 81; it reads EYGTLLQDLT…RPDLLTMVVD (79 aa). Residues serine 61, serine 90, serine 104, and serine 116 each carry the phosphoserine modification. The segment at 98-107 is microtubule-binding; that stretch reads KLTRIPSAKK. Positions 122–129 are microtubule-binding; that stretch reads KLAPPPKK.

Binds RPS6KA3, MAPK3 and MAPK1. Transient interaction with PLD1 and PLD2. Interacts with CASP8 and FADD. Post-translationally, phosphorylated by protein kinase C and calcium-calmodulin-dependent protein kinase. These phosphorylation events are modulated by neurotransmitters or hormones. In terms of tissue distribution, ubiquitously expressed. Most abundant in tissues such as heart, brain, muscle and adipose tissue which utilize glucose as an energy source. Lower expression in glucose-producing tissues. Higher levels of expression are found in tissues from individuals with type 2 diabetes than in controls.

It is found in the cytoplasm. Functionally, blocks Ras-mediated inhibition of integrin activation and modulates the ERK MAP kinase cascade. Inhibits RPS6KA3 activities by retaining it in the cytoplasm. Inhibits both TNFRSF6- and TNFRSF1A-mediated CASP8 activity and apoptosis. Regulates glucose transport by controlling both the content of SLC2A1 glucose transporters on the plasma membrane and the insulin-dependent trafficking of SLC2A4 from the cell interior to the surface. The chain is Astrocytic phosphoprotein PEA-15 (PEA15) from Homo sapiens (Human).